The following is a 134-amino-acid chain: MQARVKWVEGLTFLGESASGHQILMDGNSGDKAPSPMEMVLMAAGGCSAIDVVSILQKGRQDVVDCEVKLTSERREEAPRLFTHINLHFIVTGRDLKDAAVARAVDLSAEKYCSVALMLEKAVNITHSYEVVAA.

The chain is Protein YhfA (yhfA) from Escherichia coli O157:H7.